Consider the following 400-residue polypeptide: Snake venom metalloproteinase H1 (400 aa).

The N-terminal stretch at 1–6 is a signal peptide; it reads FPYQGS. A propeptide spanning residues 7 to 176 is cleaved from the precursor; that stretch reads SIILESGNVN…KKASQLIVST (170 aa). Residues 180-377 enclose the Peptidase M12B domain; sequence RYMEIVIVVD…ENPPCILNKP (198 aa). 2 residues coordinate Ca(2+): E183 and D267. 3 disulfides stabilise this stretch: C291–C372, C331–C356, and C333–C339. H316 contributes to the Zn(2+) binding site. E317 is an active-site residue. Residues H320 and H326 each contribute to the Zn(2+) site. Positions 372, 375, 387, 390, 392, 394, and 400 each coordinate Ca(2+). The propeptide occupies 378 to 400; sequence LRTDTVSTPVSGNELLEAGKDYD.

The protein belongs to the venom metalloproteinase (M12B) family. P-I subfamily. In terms of assembly, monomer. The cofactor is Zn(2+). In terms of tissue distribution, expressed by the venom gland.

It localises to the secreted. Functionally, snake venom metalloproteinase that impairs hemostasis in the envenomed animal. In Deinagkistrodon acutus (Hundred-pace snake), this protein is Snake venom metalloproteinase H1.